The chain runs to 538 residues: Dolichol kinase (538 aa).

Over 1–18 the chain is Lumenal; sequence MTRECAPPTPGSGAPLSG. The helical transmembrane segment at 19–39 threads the bilayer; the sequence is SVLAEAAVVFVVVLSIHAAVW. The Cytoplasmic segment spans residues 40 to 74; sequence DRYSWCAVALAVQAFYVQYKWDRLLQQGSAVFQFR. The helical transmembrane segment at 75–95 threads the bilayer; that stretch reads MSANSGLLPASVVMPLLGLVM. Residues 96–111 are Lumenal-facing; it reads KERCQAAGNPYFERFG. Residues 112 to 132 form a helical membrane-spanning segment; sequence IVVAATGMAVALFSSVLALGI. Residues 133-134 are Cytoplasmic-facing; that stretch reads TR. A helical transmembrane segment spans residues 135 to 155; that stretch reads PVPTNTCVISGLAGGVIIYIM. The Lumenal segment spans residues 156–163; sequence KHSLSVGE. Residues 164–184 form a helical membrane-spanning segment; sequence VIEVLEALLIFVYLNMILLYL. Residues 185 to 188 lie on the Cytoplasmic side of the membrane; it reads LPRC. Residues 189-209 traverse the membrane as a helical segment; that stretch reads FTPGEALLVLGGISFMLNQLI. At 210–224 the chain is on the lumenal side; the sequence is KRSLTVVESQGDPLD. Residues 225 to 245 form a helical membrane-spanning segment; the sequence is FFLLVVVVGMVLMGIFFSTLF. Residues 246–254 are Cytoplasmic-facing; the sequence is VFMDSGTWA. The helical transmembrane segment at 255 to 275 threads the bilayer; the sequence is SSIFFHLMTCVLGLGVVLPWL. Over 276 to 297 the chain is Lumenal; the sequence is HRLIRRNPLLWLFQFLFQTETR. Residues 298–318 traverse the membrane as a helical segment; sequence VYLLAYWCLLATVACLVVLYQ. At 319–337 the chain is on the cytoplasmic side; that stretch reads NAKRSSSESKKHQAPTITR. The helical transmembrane segment at 338–354 threads the bilayer; that stretch reads KYFHFIVVATYIPGIIL. The Lumenal portion of the chain corresponds to 355 to 359; the sequence is DRPLL. A helical transmembrane segment spans residues 360-380; sequence YVAATVCLAVFIFLEYVRYFR. Topologically, residues 381–401 are cytoplasmic; sequence IKPLGHTLRSLLSLFLDERDS. Residues 402–422 traverse the membrane as a helical segment; the sequence is GPLILTHIYLLLGMSLPIWLV. Over 423–436 the chain is Lumenal; it reads PRPCTQKGSLGGAR. Residues 437 to 457 traverse the membrane as a helical segment; sequence ALVPYAGVLAVGVGDTVASIF. The Cytoplasmic portion of the chain corresponds to 458–472; sequence GSTMGEIRWPGTKKT. Positions 459 to 474 are CTP-binding; that stretch reads STMGEIRWPGTKKTFE. A helical transmembrane segment spans residues 473-493; the sequence is FEGTMTSIFAQIISVALILIF. The Lumenal portion of the chain corresponds to 494–495; sequence DS. The chain crosses the membrane as a helical span at residues 496-516; the sequence is GVDLNYSYAWILGSISTVSLL. Over 517 to 538 the chain is Cytoplasmic; it reads EAYTTQIDNLLLPLYLLILLMA.

This sequence belongs to the polyprenol kinase family.

It is found in the endoplasmic reticulum membrane. It carries out the reaction a di-trans,poly-cis-dolichol + CTP = a di-trans,poly-cis-dolichyl phosphate + CDP + H(+). Its pathway is protein modification; protein glycosylation. Its function is as follows. Catalyzes CTP-mediated phosphorylation of dolichol, the terminal step in de novo dolichyl monophosphate (Dol-P) biosynthesis. Dol-P is a lipid carrier essential for the synthesis of N-linked and O-linked oligosaccharides and for GPI anchors. This chain is Dolichol kinase (DOLK), found in Bos taurus (Bovine).